A 395-amino-acid polypeptide reads, in one-letter code: Elongation factor Tu (395 aa).

The region spanning 10-204 is the tr-type G domain; it reads KPHVNIGTIG…NVDEYIPLPQ (195 aa). The tract at residues 19–26 is G1; that stretch reads GHVDHGKT. Position 19–26 (19–26) interacts with GTP; that stretch reads GHVDHGKT. Residue T26 coordinates Mg(2+). A G2 region spans residues 60–64; the sequence is GITIN. The interval 81–84 is G3; it reads DCPG. GTP contacts are provided by residues 81–85 and 136–139; these read DCPGH and NKVD. A G4 region spans residues 136 to 139; that stretch reads NKVD. The interval 174–176 is G5; that stretch reads SAL.

It belongs to the TRAFAC class translation factor GTPase superfamily. Classic translation factor GTPase family. EF-Tu/EF-1A subfamily. As to quaternary structure, monomer.

The protein localises to the cytoplasm. The enzyme catalyses GTP + H2O = GDP + phosphate + H(+). Functionally, GTP hydrolase that promotes the GTP-dependent binding of aminoacyl-tRNA to the A-site of ribosomes during protein biosynthesis. This Amoebophilus asiaticus (strain 5a2) protein is Elongation factor Tu.